Reading from the N-terminus, the 292-residue chain is Elongation factor Ts (292 aa).

Residues 82–85 (TDFV) form an involved in Mg(2+) ion dislocation from EF-Tu region.

The protein belongs to the EF-Ts family.

The protein resides in the cytoplasm. In terms of biological role, associates with the EF-Tu.GDP complex and induces the exchange of GDP to GTP. It remains bound to the aminoacyl-tRNA.EF-Tu.GTP complex up to the GTP hydrolysis stage on the ribosome. The protein is Elongation factor Ts of Bordetella bronchiseptica (strain ATCC BAA-588 / NCTC 13252 / RB50) (Alcaligenes bronchisepticus).